The following is a 236-amino-acid chain: uncharacterized protein (236 aa).

Over residues Met-1–Lys-17 the composition is skewed to polar residues. The segment at Met-1 to Ile-94 is disordered. The span at Ser-18–Leu-35 shows a compositional bias: low complexity. The region spanning Gly-58–Gly-91 is the Collagen-like domain.

Belongs to the sputnik virus V6 family.

This is an uncharacterized protein from Sputnik virophage.